Consider the following 425-residue polypeptide: UPF0597 protein KPN78578_43500 (425 aa).

This sequence belongs to the UPF0597 family.

The protein is UPF0597 protein KPN78578_43500 of Klebsiella pneumoniae subsp. pneumoniae (strain ATCC 700721 / MGH 78578).